The following is a 152-amino-acid chain: Nucleoside diphosphate kinase A 2 (152 aa).

Lysine 12, phenylalanine 60, arginine 88, threonine 94, arginine 105, and asparagine 115 together coordinate ATP. Histidine 118 serves as the catalytic Pros-phosphohistidine intermediate.

This sequence belongs to the NDK family. As to quaternary structure, homohexamer. Requires Mg(2+) as cofactor. In terms of processing, the N-terminus is blocked.

The protein resides in the cytoplasm. It is found in the cell membrane. Its subcellular location is the nucleus. It carries out the reaction a 2'-deoxyribonucleoside 5'-diphosphate + ATP = a 2'-deoxyribonucleoside 5'-triphosphate + ADP. It catalyses the reaction a ribonucleoside 5'-diphosphate + ATP = a ribonucleoside 5'-triphosphate + ADP. Autophosphorylation at His-118 increases serine/threonine protein kinase activity of the enzyme. Interaction with the SET complex inhibits exonuclease activity. Its function is as follows. Major role in the synthesis of nucleoside triphosphates other than ATP. Possesses nucleoside-diphosphate kinase, serine/threonine-specific protein kinase, geranyl and farnesyl pyrophosphate kinase, histidine protein kinase and 3'-5' exonuclease activities. Involved in cell proliferation, differentiation and development, signal transduction, G protein-coupled receptor endocytosis, and gene expression. Required for neural development including neural patterning and cell fate determination. This chain is Nucleoside diphosphate kinase A 2 (NME1-2), found in Bos taurus (Bovine).